The primary structure comprises 234 residues: MAKLTKRMRVIRDKVDATKQYDITEAVALLKELATAKFVESVDVAVNLGIDARKSDQNVRGATVLPNGTGRSVRVAVFAQGPNAEAAKAAGAELVGMEDLADQIKKGEMNFDVVIASPDAMRVVGQLGQILGPRGLMPNPKVGTVTPNVAEAVKNAKAGQVRYRNDKNGIIHTTIGKVDFESDKLKENLEALLVALKKAKPSQAKGVYIKKVSLSTTMGAGVAIDQSGLTAVAN.

Belongs to the universal ribosomal protein uL1 family. In terms of assembly, part of the 50S ribosomal subunit.

In terms of biological role, binds directly to 23S rRNA. The L1 stalk is quite mobile in the ribosome, and is involved in E site tRNA release. Protein L1 is also a translational repressor protein, it controls the translation of the L11 operon by binding to its mRNA. The chain is Large ribosomal subunit protein uL1 from Serratia proteamaculans (strain 568).